Here is a 91-residue protein sequence, read N- to C-terminus: Cell division topological specificity factor (91 aa).

Belongs to the MinE family.

Prevents the cell division inhibition by proteins MinC and MinD at internal division sites while permitting inhibition at polar sites. This ensures cell division at the proper site by restricting the formation of a division septum at the midpoint of the long axis of the cell. This Wigglesworthia glossinidia brevipalpis protein is Cell division topological specificity factor.